Reading from the N-terminus, the 288-residue chain is ATP synthase subunit a (288 aa).

Helical transmembrane passes span 47 to 67, 104 to 124, 157 to 177, 199 to 219, 237 to 257, and 258 to 278; these read LDSM…FWMV, LIAP…LMDL, DPNI…FYSI, PIVQ…TLIA, LIFI…SVPW, and AIFH…LTIV.

Belongs to the ATPase A chain family. As to quaternary structure, F-type ATPases have 2 components, CF(1) - the catalytic core - and CF(0) - the membrane proton channel. CF(1) has five subunits: alpha(3), beta(3), gamma(1), delta(1), epsilon(1). CF(0) has three main subunits: a(1), b(2) and c(9-12). The alpha and beta chains form an alternating ring which encloses part of the gamma chain. CF(1) is attached to CF(0) by a central stalk formed by the gamma and epsilon chains, while a peripheral stalk is formed by the delta and b chains.

The protein resides in the cell inner membrane. In terms of biological role, key component of the proton channel; it plays a direct role in the translocation of protons across the membrane. This chain is ATP synthase subunit a, found in Psychrobacter cryohalolentis (strain ATCC BAA-1226 / DSM 17306 / VKM B-2378 / K5).